Reading from the N-terminus, the 176-residue chain is MTTIVSVRRHGKVVMAGDGQVSLGNTVMKGNAKKVRRLYHGEVIAGFAGATADAFTLFERFEAQLEKHQGHLVRAAVELAKDWRTDRSLSRLEAMLAVANKDASLIITGNGDVVEPEDGLIAMGSGGAFAQAAARALLLKTDLSAREIAETSLHIAGDICVFTNHNITIEEQDLAD.

T2 is an active-site residue. Residues G157, C160, and T163 each contribute to the Na(+) site.

This sequence belongs to the peptidase T1B family. HslV subfamily. In terms of assembly, a double ring-shaped homohexamer of HslV is capped on each side by a ring-shaped HslU homohexamer. The assembly of the HslU/HslV complex is dependent on binding of ATP.

The protein localises to the cytoplasm. It catalyses the reaction ATP-dependent cleavage of peptide bonds with broad specificity.. With respect to regulation, allosterically activated by HslU binding. In terms of biological role, protease subunit of a proteasome-like degradation complex believed to be a general protein degrading machinery. In Pseudomonas syringae pv. tomato (strain ATCC BAA-871 / DC3000), this protein is ATP-dependent protease subunit HslV.